We begin with the raw amino-acid sequence, 101 residues long: Pro-corazonin (101 aa).

The N-terminal stretch at 1–16 (MLVLFVLSLVVSCALC) is a signal peptide. Asparagine 27 is subject to Asparagine amide. The propeptide occupies 31–101 (SNFPAEISAL…REKAPNNDNY (71 aa)).

This sequence belongs to the corazonin family. In terms of tissue distribution, expressed in central brain and the retrocerebral complex but not in antennal lobes, optic lobes or in gnathal, thoracic and abdominal ganglia (at protein level).

It is found in the secreted. In terms of biological role, cardioactive peptide. Corazonin is probably involved in the physiological regulation of the heart beat. In Camponotus floridanus (Florida carpenter ant), this protein is Pro-corazonin.